The chain runs to 153 residues: 3-dehydroquinate dehydratase (153 aa).

Residue Y26 is the Proton acceptor of the active site. Residues N77, H83, and D90 each coordinate substrate. The Proton donor role is filled by H103. Residues 104–105 (LS) and R114 each bind substrate.

It belongs to the type-II 3-dehydroquinase family. Homododecamer.

The enzyme catalyses 3-dehydroquinate = 3-dehydroshikimate + H2O. Its pathway is metabolic intermediate biosynthesis; chorismate biosynthesis; chorismate from D-erythrose 4-phosphate and phosphoenolpyruvate: step 3/7. Functionally, catalyzes a trans-dehydration via an enolate intermediate. This chain is 3-dehydroquinate dehydratase, found in Colwellia psychrerythraea (strain 34H / ATCC BAA-681) (Vibrio psychroerythus).